The chain runs to 855 residues: DNA polymerase (855 aa).

One can recognise a 3'-5' exonuclease domain in the interval 107-332; the sequence is KPEMKPVFDA…LHNFFLPKIE (226 aa). A polymerase region spans residues 333–833; sequence KNEKLCSLYY…MDKEHPDHSK (501 aa).

The protein belongs to the DNA polymerase type-A family. Single-chain monomer with multiple functions.

The enzyme catalyses DNA(n) + a 2'-deoxyribonucleoside 5'-triphosphate = DNA(n+1) + diphosphate. Its function is as follows. Replicates the viral genomic DNA. This polymerase possesses two enzymatic activities: DNA synthesis (polymerase) and an exonucleolytic activity that degrades single-stranded DNA in the 3'-5' direction for proofreading purpose. The DNA synthesis very likely occurs by strand displacement. The chain is DNA polymerase from Escherichia phage T5 (Enterobacteria phage T5).